The following is a 398-amino-acid chain: Acetate kinase 1 (398 aa).

Asparagine 9 contributes to the Mg(2+) binding site. ATP is bound at residue lysine 16. Arginine 89 is a binding site for substrate. Aspartate 146 serves as the catalytic Proton donor/acceptor. ATP is bound by residues 206–210 (HLGNG), 281–283 (DCR), and 329–333 (GIGEN). Glutamate 384 is a Mg(2+) binding site.

Belongs to the acetokinase family. Homodimer. It depends on Mg(2+) as a cofactor. Mn(2+) serves as cofactor.

The protein localises to the cytoplasm. It carries out the reaction acetate + ATP = acetyl phosphate + ADP. Its pathway is metabolic intermediate biosynthesis; acetyl-CoA biosynthesis; acetyl-CoA from acetate: step 1/2. In terms of biological role, catalyzes the formation of acetyl phosphate from acetate and ATP. Can also catalyze the reverse reaction. This is Acetate kinase 1 from Vibrio cholerae serotype O1 (strain ATCC 39315 / El Tor Inaba N16961).